The primary structure comprises 137 residues: Dormancy-associated protein homolog 3 (137 aa).

Disordered stretches follow at residues 1 to 55 (MGLL…DSLP) and 69 to 137 (KPPG…TYGM). Over residues 32-43 (FRPSSGNDQSEA) the composition is skewed to polar residues. The span at 70–87 (PPGYQGSSAPASPAGSTP) shows a compositional bias: low complexity. Ser81 carries the post-translational modification Phosphoserine. Over residues 88–97 (PLSPFSPPLS) the composition is skewed to pro residues. The span at 104-118 (EPFRFRRRSTSDAFE) shows a compositional bias: basic and acidic residues. The segment covering 127–137 (GPRSSPPTYGM) has biased composition (polar residues).

The protein belongs to the DRM1/ARP family.

This is Dormancy-associated protein homolog 3 from Arabidopsis thaliana (Mouse-ear cress).